Consider the following 367-residue polypeptide: Molybdopterin synthase catalytic subunit (367 aa).

Substrate contacts are provided by residues 101 to 102 (HR), Lys117, and 124 to 126 (KKE).

This sequence belongs to the MoaE family. MOCS2B subfamily. As to quaternary structure, heterotetramer; composed of 2 small (Mocs2A) and 2 large (Mocs2B) subunits.

It localises to the cytoplasm. The enzyme catalyses 2 [molybdopterin-synthase sulfur-carrier protein]-C-terminal-Gly-aminoethanethioate + cyclic pyranopterin phosphate + H2O = molybdopterin + 2 [molybdopterin-synthase sulfur-carrier protein]-C-terminal Gly-Gly + 2 H(+). Its pathway is cofactor biosynthesis; molybdopterin biosynthesis. Functionally, catalytic subunit of the molybdopterin synthase complex, a complex that catalyzes the conversion of precursor Z into molybdopterin. Acts by mediating the incorporation of 2 sulfur atoms from thiocarboxylated Mocs2A into precursor Z to generate a dithiolene group. In Drosophila erecta (Fruit fly), this protein is Molybdopterin synthase catalytic subunit.